Here is a 234-residue protein sequence, read N- to C-terminus: Small ribosomal subunit protein eS4 (234 aa).

In terms of domain architecture, S4 RNA-binding spans M39–M102.

It belongs to the eukaryotic ribosomal protein eS4 family.

This chain is Small ribosomal subunit protein eS4, found in Methanocella arvoryzae (strain DSM 22066 / NBRC 105507 / MRE50).